A 306-amino-acid chain; its full sequence is MLIKAYSSSANLGAGFDILALAHNAFEDSVEMEAIPNSTLQVLVTGDGVPNEVDKNSASYAVYRLLSELDVKVKVKMKVIKGIPAGLGLGSSGASAVAAVVGVNNLLKLGLDKQELVRASMIGEIASSGSAHPDNVAASVYGGVVAVLNTEPVTVSPIPVNLNFSLLLFIPVLQLKDKTKKAREMLPRNVELGKMVRNSRYLSSTILGLVKGDRELLRLGLNDEIVEVARSPLFPHYEKLKKISIENNAIGACVSGAGPTIAVFVDEYSDKNKIKKEGLEICETYSQKCLVKEAKIAGGAWVERWN.

84 to 94 provides a ligand contact to ATP; it reads PAGLGLGSSGA.

It belongs to the GHMP kinase family. Homoserine kinase subfamily.

The protein resides in the cytoplasm. The enzyme catalyses L-homoserine + ATP = O-phospho-L-homoserine + ADP + H(+). Its pathway is amino-acid biosynthesis; L-threonine biosynthesis; L-threonine from L-aspartate: step 4/5. Its function is as follows. Catalyzes the ATP-dependent phosphorylation of L-homoserine to L-homoserine phosphate. The polypeptide is Homoserine kinase (Sulfolobus acidocaldarius (strain ATCC 33909 / DSM 639 / JCM 8929 / NBRC 15157 / NCIMB 11770)).